The sequence spans 372 residues: Chaperone protein DnaJ (372 aa).

Residues 5–70 form the J domain; the sequence is DYYEVLGVAK…DKRAAYDQFG (66 aa). A CR-type zinc finger spans residues 133–211; sequence GTETKIRIPT…CHGEGRVKKH (79 aa). Zn(2+) is bound by residues Cys-146, Cys-149, Cys-163, Cys-166, Cys-185, Cys-188, Cys-199, and Cys-202. CXXCXGXG motif repeat units lie at residues 146 to 153, 163 to 170, 185 to 192, and 199 to 206; these read CGTCHGSG, CSACGGHG, CPRCGGTG, and CPSCHGEG.

Belongs to the DnaJ family. Homodimer. It depends on Zn(2+) as a cofactor.

It localises to the cytoplasm. Participates actively in the response to hyperosmotic and heat shock by preventing the aggregation of stress-denatured proteins and by disaggregating proteins, also in an autonomous, DnaK-independent fashion. Unfolded proteins bind initially to DnaJ; upon interaction with the DnaJ-bound protein, DnaK hydrolyzes its bound ATP, resulting in the formation of a stable complex. GrpE releases ADP from DnaK; ATP binding to DnaK triggers the release of the substrate protein, thus completing the reaction cycle. Several rounds of ATP-dependent interactions between DnaJ, DnaK and GrpE are required for fully efficient folding. Also involved, together with DnaK and GrpE, in the DNA replication of plasmids through activation of initiation proteins. The sequence is that of Chaperone protein DnaJ from Thiobacillus denitrificans (strain ATCC 25259 / T1).